The chain runs to 132 residues: Small ribosomal subunit protein uS11 (132 aa).

The segment covering 1–16 (MAAGMKGKRSRRRKER) has biased composition (basic residues). The tract at residues 1-20 (MAAGMKGKRSRRRKERKNVE) is disordered.

It belongs to the universal ribosomal protein uS11 family. Part of the 30S ribosomal subunit. Interacts with proteins S7 and S18. Binds to IF-3.

Its function is as follows. Located on the platform of the 30S subunit, it bridges several disparate RNA helices of the 16S rRNA. Forms part of the Shine-Dalgarno cleft in the 70S ribosome. This is Small ribosomal subunit protein uS11 from Clostridium botulinum (strain Loch Maree / Type A3).